Consider the following 443-residue polypeptide: Ribulose bisphosphate carboxylase large chain (443 aa).

2 residues coordinate substrate: Asn89 and Thr139. Catalysis depends on Lys141, which acts as the Proton acceptor. Lys143 serves as a coordination point for substrate. The Mg(2+) site is built by Lys167, Asp169, and Glu170. Lys167 is subject to N6-carboxylysine. The active-site Proton acceptor is His260. Substrate-binding residues include Arg261, His293, and Ser345.

This sequence belongs to the RuBisCO large chain family. Type I subfamily. As to quaternary structure, heterohexadecamer of 8 large chains and 8 small chains; disulfide-linked. The disulfide link is formed within the large subunit homodimers. The cofactor is Mg(2+). Post-translationally, the disulfide bond which can form in the large chain dimeric partners within the hexadecamer appears to be associated with oxidative stress and protein turnover.

Its subcellular location is the plastid. The protein localises to the chloroplast. The catalysed reaction is 2 (2R)-3-phosphoglycerate + 2 H(+) = D-ribulose 1,5-bisphosphate + CO2 + H2O. It carries out the reaction D-ribulose 1,5-bisphosphate + O2 = 2-phosphoglycolate + (2R)-3-phosphoglycerate + 2 H(+). RuBisCO catalyzes two reactions: the carboxylation of D-ribulose 1,5-bisphosphate, the primary event in carbon dioxide fixation, as well as the oxidative fragmentation of the pentose substrate in the photorespiration process. Both reactions occur simultaneously and in competition at the same active site. The polypeptide is Ribulose bisphosphate carboxylase large chain (Villarsia calthifolia (Marsh flower)).